The following is a 370-amino-acid chain: tRNA 2-selenouridine synthase (370 aa).

In terms of domain architecture, Rhodanese spans 12–136; it reads FLDDVPMMDM…MRTFLLETTQ (125 aa). The active-site S-selanylcysteine intermediate is C95.

This sequence belongs to the SelU family. Monomer.

The catalysed reaction is 5-methylaminomethyl-2-thiouridine(34) in tRNA + selenophosphate + (2E)-geranyl diphosphate + H2O + H(+) = 5-methylaminomethyl-2-selenouridine(34) in tRNA + (2E)-thiogeraniol + phosphate + diphosphate. It catalyses the reaction 5-methylaminomethyl-2-thiouridine(34) in tRNA + (2E)-geranyl diphosphate = 5-methylaminomethyl-S-(2E)-geranyl-thiouridine(34) in tRNA + diphosphate. It carries out the reaction 5-methylaminomethyl-S-(2E)-geranyl-thiouridine(34) in tRNA + selenophosphate + H(+) = 5-methylaminomethyl-2-(Se-phospho)selenouridine(34) in tRNA + (2E)-thiogeraniol. The enzyme catalyses 5-methylaminomethyl-2-(Se-phospho)selenouridine(34) in tRNA + H2O = 5-methylaminomethyl-2-selenouridine(34) in tRNA + phosphate. In terms of biological role, involved in the post-transcriptional modification of the uridine at the wobble position (U34) of tRNA(Lys), tRNA(Glu) and tRNA(Gln). Catalyzes the conversion of 2-thiouridine (S2U-RNA) to 2-selenouridine (Se2U-RNA). Acts in a two-step process involving geranylation of 2-thiouridine (S2U) to S-geranyl-2-thiouridine (geS2U) and subsequent selenation of the latter derivative to 2-selenouridine (Se2U) in the tRNA chain. The sequence is that of tRNA 2-selenouridine synthase from Pseudomonas putida (strain GB-1).